A 552-amino-acid chain; its full sequence is Hydroxylamine reductase (552 aa).

Residues cysteine 5, cysteine 8, cysteine 20, and cysteine 27 each coordinate [2Fe-2S] cluster. Positions 251, 275, 319, 407, 435, 460, 494, and 496 each coordinate hybrid [4Fe-2O-2S] cluster. A Cysteine persulfide modification is found at cysteine 407.

Belongs to the HCP family. [2Fe-2S] cluster serves as cofactor. It depends on hybrid [4Fe-2O-2S] cluster as a cofactor.

It localises to the cytoplasm. The enzyme catalyses A + NH4(+) + H2O = hydroxylamine + AH2 + H(+). In terms of biological role, catalyzes the reduction of hydroxylamine to form NH(3) and H(2)O. The sequence is that of Hydroxylamine reductase from Shigella flexneri.